Consider the following 792-residue polypeptide: Lon protease (792 aa).

A Lon N-terminal domain is found at 16-211 (DAVVVVPVSN…KVSAFLAQRL (196 aa)). Residue 361 to 368 (GPPGVGKT) participates in ATP binding. Residues 597–778 (TSVPGVATGL…EDAIEAGLDP (182 aa)) enclose the Lon proteolytic domain. Active-site residues include Ser-684 and Lys-727.

Belongs to the peptidase S16 family. Homohexamer. Organized in a ring with a central cavity.

It localises to the cytoplasm. The catalysed reaction is Hydrolysis of proteins in presence of ATP.. Functionally, ATP-dependent serine protease that mediates the selective degradation of mutant and abnormal proteins as well as certain short-lived regulatory proteins. Required for cellular homeostasis and for survival from DNA damage and developmental changes induced by stress. Degrades polypeptides processively to yield small peptide fragments that are 5 to 10 amino acids long. Binds to DNA in a double-stranded, site-specific manner. The sequence is that of Lon protease from Phenylobacterium zucineum (strain HLK1).